Consider the following 60-residue polypeptide: Large ribosomal subunit protein uL30 (60 aa).

This sequence belongs to the universal ribosomal protein uL30 family. Part of the 50S ribosomal subunit.

In Clavibacter michiganensis subsp. michiganensis (strain NCPPB 382), this protein is Large ribosomal subunit protein uL30.